Consider the following 447-residue polypeptide: Dual specificity protein phosphatase CDC14C (447 aa).

An a region spans residues 14–168 (PQDDVYVDIT…AMQYGFLNFN (155 aa)). The segment at 169 to 182 (SFNLDEYEHYEKAE) is linker. The segment at 183–349 (NGDLNWIIPD…EGDYFRQRLK (167 aa)) is b. The region spanning 184-344 (GDLNWIIPDR…TSLWLEGDYF (161 aa)) is the Tyrosine-protein phosphatase domain. Cys284 serves as the catalytic Phosphocysteine intermediate. Residues 426–446 (FTLCSVVIWWIVCDYILPILL) form a helical membrane-spanning segment.

Belongs to the protein-tyrosine phosphatase family. Non-receptor class CDC14 subfamily.

It localises to the endoplasmic reticulum membrane. It catalyses the reaction O-phospho-L-tyrosyl-[protein] + H2O = L-tyrosyl-[protein] + phosphate. The enzyme catalyses O-phospho-L-seryl-[protein] + H2O = L-seryl-[protein] + phosphate. It carries out the reaction O-phospho-L-threonyl-[protein] + H2O = L-threonyl-[protein] + phosphate. In terms of biological role, dual-specificity phosphatase. Preferentially dephosphorylates proteins modified by proline-directed kinases. This chain is Dual specificity protein phosphatase CDC14C, found in Homo sapiens (Human).